A 197-amino-acid polypeptide reads, in one-letter code: Phosphoheptose isomerase (197 aa).

One can recognise an SIS domain in the interval 34–196; that stretch reads MVQCLLGGNK…DRTLFPQDDQ (163 aa). Substrate is bound at residue 49–51; that stretch reads NGG. Zn(2+) contacts are provided by His-58 and Glu-62. Substrate is bound by residues Glu-62, 91-92, 117-119, Ser-122, and Gln-172; these read ND and STS. 2 residues coordinate Zn(2+): Gln-172 and His-180.

It belongs to the SIS family. GmhA subfamily. In terms of assembly, homotetramer. The cofactor is Zn(2+).

The protein resides in the cytoplasm. It carries out the reaction 2 D-sedoheptulose 7-phosphate = D-glycero-alpha-D-manno-heptose 7-phosphate + D-glycero-beta-D-manno-heptose 7-phosphate. Its pathway is carbohydrate biosynthesis; D-glycero-D-manno-heptose 7-phosphate biosynthesis; D-glycero-alpha-D-manno-heptose 7-phosphate and D-glycero-beta-D-manno-heptose 7-phosphate from sedoheptulose 7-phosphate: step 1/1. Its function is as follows. Catalyzes the isomerization of sedoheptulose 7-phosphate in D-glycero-D-manno-heptose 7-phosphate. This chain is Phosphoheptose isomerase, found in Shewanella loihica (strain ATCC BAA-1088 / PV-4).